A 242-amino-acid polypeptide reads, in one-letter code: tRNA (guanine-N(1)-)-methyltransferase (242 aa).

S-adenosyl-L-methionine-binding positions include Gly114 and 134–139; that span reads IGDFVL. The segment covering 223–233 has biased composition (basic and acidic residues); the sequence is RRDLLPEHSKN. The tract at residues 223-242 is disordered; that stretch reads RRDLLPEHSKNNPEQTNKLS.

The protein belongs to the RNA methyltransferase TrmD family. As to quaternary structure, homodimer.

It is found in the cytoplasm. It catalyses the reaction guanosine(37) in tRNA + S-adenosyl-L-methionine = N(1)-methylguanosine(37) in tRNA + S-adenosyl-L-homocysteine + H(+). In terms of biological role, specifically methylates guanosine-37 in various tRNAs. The chain is tRNA (guanine-N(1)-)-methyltransferase from Rhodopirellula baltica (strain DSM 10527 / NCIMB 13988 / SH1).